Here is a 218-residue protein sequence, read N- to C-terminus: Probable nicotinate-nucleotide adenylyltransferase (218 aa).

This sequence belongs to the NadD family.

It carries out the reaction nicotinate beta-D-ribonucleotide + ATP + H(+) = deamido-NAD(+) + diphosphate. It participates in cofactor biosynthesis; NAD(+) biosynthesis; deamido-NAD(+) from nicotinate D-ribonucleotide: step 1/1. Catalyzes the reversible adenylation of nicotinate mononucleotide (NaMN) to nicotinic acid adenine dinucleotide (NaAD). This Corynebacterium glutamicum (strain ATCC 13032 / DSM 20300 / JCM 1318 / BCRC 11384 / CCUG 27702 / LMG 3730 / NBRC 12168 / NCIMB 10025 / NRRL B-2784 / 534) protein is Probable nicotinate-nucleotide adenylyltransferase.